A 1175-amino-acid polypeptide reads, in one-letter code: 1-phosphatidylinositol 4,5-bisphosphate phosphodiesterase beta-4 (1175 aa).

N-acetylalanine is present on Ala2. Residues 313–463 form the PI-PLC X-box domain; that stretch reads QEMDHPLAHY…LKRKILIKNK (151 aa). Residues His328 and His375 contribute to the active site. Positions 482 to 511 are disordered; that stretch reads EAGESASPANILEDDNEEEIESADQEEEAH. The span at 493 to 508 shows a compositional bias: acidic residues; it reads LEDDNEEEIESADQEE. The PI-PLC Y-box domain maps to 565-681; the sequence is LSTMINYAQP…GYLLKPDFMR (117 aa). Residues 684 to 809 enclose the C2 domain; it reads DRTFDPFSET…SLRNEGNKPL (126 aa). 2 disordered regions span residues 863–895 and 1082–1110; these read ADVP…ELRP and KISM…VREL. Composition is skewed to polar residues over residues 881–895 and 1085–1094; these read AKAN…ELRP and MENSKAISQD. Residue Thr886 is modified to Phosphothreonine. Over residues 1095–1109 the composition is skewed to basic and acidic residues; sequence KSIKNKAERERRVRE.

Requires Ca(2+) as cofactor. As to expression, preferentially expressed in the retina.

It localises to the cell membrane. It catalyses the reaction a 1,2-diacyl-sn-glycero-3-phospho-(1D-myo-inositol-4,5-bisphosphate) + H2O = 1D-myo-inositol 1,4,5-trisphosphate + a 1,2-diacyl-sn-glycerol + H(+). The enzyme catalyses a 1,2-diacyl-sn-glycero-3-phospho-(1D-myo-inositol) + H2O = 1D-myo-inositol 1-phosphate + a 1,2-diacyl-sn-glycerol + H(+). Activated phosphatidylinositol-specific phospholipase C enzymes catalyze the production of the second messenger molecules diacylglycerol (DAG) and inositol 1,4,5-trisphosphate (IP3) involved in G-protein coupled receptor signaling pathways. PLCB4 is a direct effector of the endothelin receptor signaling pathway that plays an essential role in lower jaw and middle ear structures development. The protein is 1-phosphatidylinositol 4,5-bisphosphate phosphodiesterase beta-4 of Homo sapiens (Human).